Consider the following 745-residue polypeptide: Protein transport protein SEC23 D (745 aa).

Zn(2+) is bound by residues C53, C56, C73, and C76. A zinc finger-like region spans residues 53–76 (CENCYAYFNTYCELDQWAWNCSLC).

Belongs to the SEC23/SEC24 family. SEC24 subfamily. As to quaternary structure, component of the coat protein complex II (COPII), composed of at least five proteins: the Sec23/24 complex, the Sec13/31 complex and Sar1. As to expression, mostly expressed in closed floral bud, pollen and flowers, and, to a lower extent, in mature siliques, roots and leaf primordia.

Its subcellular location is the cytoplasmic vesicle. It is found in the COPII-coated vesicle membrane. It localises to the endoplasmic reticulum membrane. The protein resides in the membrane. Component of the coat protein complex II (COPII) which promotes the formation of transport vesicles from the endoplasmic reticulum (ER). The coat has two main functions, the physical deformation of the endoplasmic reticulum membrane into vesicles and the selection of cargo molecules. May contribute to COPII-coated vesicles formation and ER-Golgi vesicle transport. Together with SEC23A, essential for pollen wall development and exine patterning, probably by regulating endoplasmic reticulum (ER) export of lipids and proteins (e.g. sporopollenin) necessary for pollen wall formation. Also involved in plastid physiology in anther tapetal cells. In Arabidopsis thaliana (Mouse-ear cress), this protein is Protein transport protein SEC23 D.